Consider the following 106-residue polypeptide: Large ribosomal subunit protein bL21 (106 aa).

The protein belongs to the bacterial ribosomal protein bL21 family. In terms of assembly, part of the 50S ribosomal subunit. Contacts protein L20.

Functionally, this protein binds to 23S rRNA in the presence of protein L20. This chain is Large ribosomal subunit protein bL21, found in Xanthomonas oryzae pv. oryzae (strain MAFF 311018).